A 589-amino-acid polypeptide reads, in one-letter code: Arylsulfatase L (589 aa).

The N-terminal stretch at methionine 1–serine 31 is a signal peptide. 2 residues coordinate Ca(2+): aspartate 46 and aspartate 47. Asparagine 58 carries an N-linked (GlcNAc...) asparagine glycan. Ca(2+) is bound at residue cysteine 86. Cysteine 86 acts as the Nucleophile in catalysis. A 3-oxoalanine (Cys) modification is found at cysteine 86. An N-linked (GlcNAc...) asparagine glycan is attached at asparagine 125. Substrate is bound at residue lysine 145. Residue histidine 147 is part of the active site. A glycan (N-linked (GlcNAc...) asparagine) is linked at asparagine 258. Histidine 301 contacts substrate. An N-linked (GlcNAc...) asparagine glycan is attached at asparagine 344. The Ca(2+) site is built by aspartate 353 and histidine 354. Lysine 378 serves as a coordination point for substrate.

This sequence belongs to the sulfatase family. Requires Ca(2+) as cofactor. Post-translationally, N-glycosylated. The conversion to 3-oxoalanine (also known as C-formylglycine, FGly), of a serine or cysteine residue in prokaryotes and of a cysteine residue in eukaryotes, is critical for catalytic activity. Expressed in the pancreas, liver and kidney.

It is found in the golgi apparatus. The protein localises to the golgi stack. The catalysed reaction is an aryl sulfate + H2O = a phenol + sulfate + H(+). With respect to regulation, inhibited by millimolar concentrations of warfarin. Its function is as follows. Exhibits arylsulfatase activity towards the artificial substrate 4-methylumbelliferyl sulfate. May be essential for the correct composition of cartilage and bone matrix during development. Has no activity toward steroid sulfates. The protein is Arylsulfatase L of Homo sapiens (Human).